Here is a 476-residue protein sequence, read N- to C-terminus: Ataxin-10 (476 aa).

Residue Arg10 is modified to Omega-N-methylarginine. Phosphoserine occurs at positions 13 and 78. Thr83 is subject to Phosphothreonine. Position 431 is a phosphoserine (Ser431).

Belongs to the ataxin-10 family. As to quaternary structure, homooligomer. Interacts with GNB2. Interacts with IQCB1. Interacts with OGT. Polyubiquitinated. In terms of processing, phosphorylation at Ser-13 by AURKB promotes the association of ATXN10 with PLK1. Phosphorylation at Ser-78 and Thr-83 by PLK1 may play a role in the regulation of cytokinesis and may stimulate the proteasome-mediated degradation of ATXN10.

It is found in the cytoplasm. It localises to the perinuclear region. The protein resides in the midbody. The protein localises to the cytoskeleton. Its subcellular location is the cilium basal body. It is found in the microtubule organizing center. It localises to the centrosome. The protein resides in the centriole. May play a role in the regulation of cytokinesis. May play a role in signaling by stimulating protein glycosylation. Induces neuritogenesis by activating the Ras-MAP kinase pathway and is necessary for the survival of cerebellar neurons. Does not appear to play a major role in ciliogenesis. The chain is Ataxin-10 (ATXN10) from Pongo abelii (Sumatran orangutan).